Here is a 125-residue protein sequence, read N- to C-terminus: Small ribosomal subunit protein uS13 (125 aa).

A disordered region spans residues 92–125 (RRSLPARGQNTQTNARTRKGRRKTVAGKKKAVKK). Basic residues predominate over residues 107 to 125 (RTRKGRRKTVAGKKKAVKK).

Belongs to the universal ribosomal protein uS13 family. In terms of assembly, part of the 30S ribosomal subunit. Forms a loose heterodimer with protein S19. Forms two bridges to the 50S subunit in the 70S ribosome.

Functionally, located at the top of the head of the 30S subunit, it contacts several helices of the 16S rRNA. In the 70S ribosome it contacts the 23S rRNA (bridge B1a) and protein L5 of the 50S subunit (bridge B1b), connecting the 2 subunits; these bridges are implicated in subunit movement. Contacts the tRNAs in the A and P-sites. This is Small ribosomal subunit protein uS13 from Chlorobium phaeobacteroides (strain BS1).